The chain runs to 48 residues: Large ribosomal subunit protein bL33A (48 aa).

This sequence belongs to the bacterial ribosomal protein bL33 family.

This chain is Large ribosomal subunit protein bL33A, found in Bacillus mycoides (strain KBAB4) (Bacillus weihenstephanensis).